A 463-amino-acid chain; its full sequence is tRNA (guanine(10)-N(2))-methyltransferase TRMT11 (463 aa).

Position 2 is an N-acetylalanine (Ala-2).

It belongs to the class I-like SAM-binding methyltransferase superfamily. TRM11 methyltransferase family. In terms of assembly, part of the heterodimeric TRMT11-TRM112 methyltransferase complex; this complex forms an active tRNA methyltransferase, where TRMT112 acts as an activator of the catalytic subunit TRMT11.

It localises to the cytoplasm. It catalyses the reaction guanosine(10) in tRNA + S-adenosyl-L-methionine = N(2)-methylguanosine(10) in tRNA + S-adenosyl-L-homocysteine + H(+). In terms of biological role, catalytic subunit of the TRMT11-TRM112 methyltransferase complex, that specifically mediates the S-adenosyl-L-methionine-dependent N(2)-methylation of guanosine nucleotide at position 10 (m2G10) in tRNAs. This is one of the major tRNA (guanine-N(2))-methyltransferases. This is tRNA (guanine(10)-N(2))-methyltransferase TRMT11 from Pongo abelii (Sumatran orangutan).